A 374-amino-acid polypeptide reads, in one-letter code: N5-carboxyaminoimidazole ribonucleotide synthase (374 aa).

ATP contacts are provided by residues Arg108, Lys148, 153–159 (GYDGKGQ), 183–186 (EKYL), Glu191, His214, and 266–267 (NE). In terms of domain architecture, ATP-grasp spans 112-296 (KETLKSAGTK…QFDTHILAVT (185 aa)).

The protein belongs to the PurK/PurT family. Homodimer.

The catalysed reaction is 5-amino-1-(5-phospho-beta-D-ribosyl)imidazole + hydrogencarbonate + ATP = 5-carboxyamino-1-(5-phospho-D-ribosyl)imidazole + ADP + phosphate + 2 H(+). The protein operates within purine metabolism; IMP biosynthesis via de novo pathway; 5-amino-1-(5-phospho-D-ribosyl)imidazole-4-carboxylate from 5-amino-1-(5-phospho-D-ribosyl)imidazole (N5-CAIR route): step 1/2. Catalyzes the ATP-dependent conversion of 5-aminoimidazole ribonucleotide (AIR) and HCO(3)(-) to N5-carboxyaminoimidazole ribonucleotide (N5-CAIR). This is N5-carboxyaminoimidazole ribonucleotide synthase from Staphylococcus aureus (strain MSSA476).